The primary structure comprises 207 residues: MTNSKQKLVLASGSPRRLELLHQIGIEPARLMPMDIDETPVKLEHPRTLCRRLSQQKAEAAQAALKSEQAWKDAYVLGSDTVVAVGRRIVGKAEYTEEASAALHLLSGRSHWVYTGICLVTPDGKIRQKVAETKVRFKRLSTREIDAYIASGQWRGKAGAYGIQGIAGAFVQKLTGSYTNVVGLPLYETMSLLSGEGFEVTSGWLEG.

The Proton acceptor role is filled by Asp80.

The protein belongs to the Maf family. YhdE subfamily. A divalent metal cation serves as cofactor.

The protein resides in the cytoplasm. It catalyses the reaction dTTP + H2O = dTMP + diphosphate + H(+). The catalysed reaction is UTP + H2O = UMP + diphosphate + H(+). In terms of biological role, nucleoside triphosphate pyrophosphatase that hydrolyzes dTTP and UTP. May have a dual role in cell division arrest and in preventing the incorporation of modified nucleotides into cellular nucleic acids. The polypeptide is dTTP/UTP pyrophosphatase (maf1) (Agrobacterium fabrum (strain C58 / ATCC 33970) (Agrobacterium tumefaciens (strain C58))).